The chain runs to 287 residues: Inactive phospholipid phosphatase 7 (287 aa).

Positions 1-75 (MPANQTRSRA…NNKDKKELPE (75 aa)) are disordered. At 1–120 (MPANQTRSRA…SSSWGSVRSM (120 aa)) the chain is on the cytoplasmic side. A compositionally biased stretch (gly residues) spans 31–40 (SGGGGGGGES). The span at 49–65 (QRQQQNQQQQGDNPQPE) shows a compositional bias: low complexity. Residues 121 to 141 (VKLLALTGHGIPWVFGTIVCL) traverse the membrane as a helical segment. Residues 142-146 (MRSNT) lie on the Extracellular side of the membrane. Residues 147 to 167 (LAGQEVLVNLLLALLLDVMTV) form a helical membrane-spanning segment. Residues 168-215 (SGMQKLVKRKGPWEMPPGFFDYLAMDIYSFPAAHASRAVMVSKFLLAH) lie on the Cytoplasmic side of the membrane. Residues 216–236 (LVLAVPLRILLVLWAILVGIS) form a helical membrane-spanning segment. At 237–247 (RVLLGRHHLTD) the chain is on the extracellular side. A helical transmembrane segment spans residues 248–268 (VGCGFALGFLHYSLVEMVWLS). Over 269–287 (SNTCQTLISIGTFNWSPLY) the chain is Cytoplasmic.

Belongs to the PA-phosphatase related phosphoesterase family.

Its subcellular location is the nucleus envelope. The protein resides in the endoplasmic reticulum membrane. It localises to the membrane. Its function is as follows. Plays a role as negative regulator of myoblast differentiation, in part through effects on MTOR signaling. Has no detectable enzymatic activity. The protein is Inactive phospholipid phosphatase 7 of Danio rerio (Zebrafish).